Consider the following 157-residue polypeptide: Probable succinate transporter subunit YjjB (157 aa).

5 consecutive transmembrane segments (helical) span residues 8–28, 34–54, 55–75, 87–107, and 129–149; these read LALM…AMVF, ALPW…LMMS, AGFN…SIGI, VFTV…TAMI, and FLKA…PGLW.

This sequence belongs to the ThrE exporter (TC 2.A.79) family. The transporter is composed of YjjB and YjjP.

It is found in the cell inner membrane. In terms of biological role, involved in succinate export with YjjP. Both proteins are required for export. In Salmonella typhi, this protein is Probable succinate transporter subunit YjjB.